The primary structure comprises 193 residues: Interferon lambda-2 (193 aa).

Residues 1–19 (MLLLLLPLLLAAVLTRTQA) form the signal peptide. An N-linked (GlcNAc...) asparagine glycan is attached at N105.

The protein belongs to the lambda interferon family.

It is found in the secreted. In terms of biological role, cytokine with antiviral, antitumour and immunomodulatory activities. Plays a critical role in the antiviral host defense, predominantly in the epithelial tissues. Acts as a ligand for the heterodimeric class II cytokine receptor composed of IL10RB and IFNLR1, and receptor engagement leads to the activation of the JAK/STAT signaling pathway resulting in the expression of IFN-stimulated genes (ISG), which mediate the antiviral state. Has a restricted receptor distribution and therefore restricted targets: is primarily active in epithelial cells and this cell type-selective action is because of the epithelial cell-specific expression of its receptor IFNLR1. Seems not to be essential for early virus-activated host defense in vaginal infection, but plays an important role in Toll-like receptor (TLR)-induced antiviral defense. Plays a significant role in the antiviral immune defense in the intestinal epithelium. Exerts an immunomodulatory effect by up-regulating MHC class I antigen expression. In Mus musculus (Mouse), this protein is Interferon lambda-2 (Ifnl2).